The following is a 522-amino-acid chain: Maturase K (522 aa).

Belongs to the intron maturase 2 family. MatK subfamily.

The protein localises to the plastid. Its subcellular location is the chloroplast. In terms of biological role, usually encoded in the trnK tRNA gene intron. Probably assists in splicing its own and other chloroplast group II introns. In Pillansia templemannii, this protein is Maturase K.